The primary structure comprises 277 residues: Large ribosomal subunit protein uL2c (277 aa).

The disordered stretch occupies residues 225 to 277 (MNPCDHPHGGGEGRSPIGRPKPVTPWGKPALGKKTRSPKRFSNKYIIRSRKMV). Over residues 255–277 (LGKKTRSPKRFSNKYIIRSRKMV) the composition is skewed to basic residues.

This sequence belongs to the universal ribosomal protein uL2 family. In terms of assembly, part of the 50S ribosomal subunit.

It localises to the plastid. The protein localises to the chloroplast. This chain is Large ribosomal subunit protein uL2c (rpl2), found in Euglena gracilis.